Reading from the N-terminus, the 199-residue chain is MSSSSLLEDLMQALQCLPSVGPKSAQRMVYHLLDKNRKGALNLSSLLERAVNEIGHCQQCRTFTEQNLCAICDNDKRNKNGMICVVEMPVDVLAIEQTALFSGTYFVLMGHLSPLDGVGPEQLGLNLLDKQLSSGQHSEVILATNPTVEGEATAYYIAEMAKRYAIKVSRIAHGVPVGGELEYVDSTTLSHSFSGRSVF.

The C4-type zinc-finger motif lies at 57–72; it reads CQQCRTFTEQNLCAIC. Positions 81–176 constitute a Toprim domain; sequence GMICVVEMPV…KVSRIAHGVP (96 aa).

This sequence belongs to the RecR family.

May play a role in DNA repair. It seems to be involved in an RecBC-independent recombinational process of DNA repair. It may act with RecF and RecO. The polypeptide is Recombination protein RecR (Psychromonas ingrahamii (strain DSM 17664 / CCUG 51855 / 37)).